We begin with the raw amino-acid sequence, 246 residues long: Small ribosomal subunit protein uS2 (246 aa).

The protein belongs to the universal ribosomal protein uS2 family.

In Pseudomonas paraeruginosa (strain DSM 24068 / PA7) (Pseudomonas aeruginosa (strain PA7)), this protein is Small ribosomal subunit protein uS2.